The sequence spans 142 residues: Large ribosomal subunit protein uL13 (142 aa).

It belongs to the universal ribosomal protein uL13 family. As to quaternary structure, part of the 50S ribosomal subunit.

In terms of biological role, this protein is one of the early assembly proteins of the 50S ribosomal subunit, although it is not seen to bind rRNA by itself. It is important during the early stages of 50S assembly. This chain is Large ribosomal subunit protein uL13, found in Pseudoalteromonas atlantica (strain T6c / ATCC BAA-1087).